The sequence spans 439 residues: Nuclear hormone receptor family member nhr-97 (439 aa).

The span at M1–A13 shows a compositional bias: polar residues. A disordered region spans residues M1–P22. Positions G32–M108 form a DNA-binding region, nuclear receptor. NR C4-type zinc fingers lie at residues C35–C56 and C72–C96. Residues L112–E135 are disordered. The NR LBD domain occupies F173–Y408.

This sequence belongs to the nuclear hormone receptor family.

The protein localises to the nucleus. Its function is as follows. Orphan nuclear receptor. This Caenorhabditis elegans protein is Nuclear hormone receptor family member nhr-97 (nhr-97).